An 895-amino-acid chain; its full sequence is Dystroglycan 1 (895 aa).

A signal peptide spans 1–29; it reads MRMSVGSAVPLPLWGRTFLLLLSVAVTQS. Positions 30–408 are required for laminin recognition; sequence HWPSEPSEAV…SQIRPTMTIP (379 aa). The tract at residues 49–71 is O-glycosylated at one site; the sequence is SMHSALSDLHETVPTVVGIPDGT. The N-linked (GlcNAc...) asparagine glycan is linked to N141. C182 and C264 are disulfide-bonded. A mucin-like domain region spans residues 316–485; sequence ATPTPVTAIG…PATRMRTTTS (170 aa). Residues T317, T319, and T379 are each glycosylated (O-linked (Man6P...) threonine). Positions 381–500 are disordered; sequence TLGPIQPTRV…GEPNQRPELK (120 aa). Residues 393–403 show a composition bias toward polar residues; sequence AGTTVPSQIRP. Residues 413 to 447 are compositionally biased toward low complexity; that stretch reads PSTVTTPPTTTTKKPRVSTPRPATPSTDSSTTTTR. The O-glycosylated at seven sites with GalNAc stretch occupies residues 463–485; the sequence is TTKAPITRLETASPATRMRTTTS. In terms of domain architecture, Peptidase S72 spans 603–712; sequence KAPARFKAKL…MSITVTGSGS (110 aa). N641, N649, and N661 each carry an N-linked (GlcNAc...) asparagine glycan. At 654 to 749 the chain is on the extracellular side; that stretch reads SIVVEWTNNT…DPEKSSEDDV (96 aa). An intrachain disulfide couples C669 to C713. Residues 724–747 are disordered; the sequence is PMRVPSEAPATEVPDRDPEKSSED. Residues 736–747 show a composition bias toward basic and acidic residues; the sequence is VPDRDPEKSSED. Residues 750–775 form a helical membrane-spanning segment; that stretch reads YLHTVIPAVVVAAILLIAGIIAMICY. A Nuclear localization signal motif is present at residues 776 to 782; sequence RKKRKGK. At 776 to 895 the chain is on the cytoplasmic side; sequence RKKRKGKLTL…YRSPPPYVPP (120 aa). At T790 the chain carries Phosphothreonine. The tract at residues 819–895 is required for interaction with CAV3; the sequence is LQEEKAPLPP…YRSPPPYVPP (77 aa). A disordered region spans residues 823–895; it reads KAPLPPPEYP…YRSPPPYVPP (73 aa). Residues 832-846 show a composition bias toward polar residues; it reads PNQSMPETTPLNQDT. Residues 859-870 are compositionally biased toward pro residues; it reads SAPPYQPPPPFT. The tract at residues 880–895 is required for binding DMD and UTRN; that stretch reads PKNMTPYRSPPPYVPP. Residues 889 to 892 carry the PPXY motif motif; the sequence is PPPY. Y892 is modified (phosphotyrosine; by SRC).

Monomer. Heterodimer of alpha- and beta-dystroglycan subunits which are the central components of the dystrophin-glycoprotein complex. This complex then can form a dystrophin-associated glycoprotein complex (DGC) which is composed of three subcomplexes: a cytoplasmic complex comprised of DMD (or UTRN), DTNA and a number of syntrophins, such as SNTB1, SNTB2, SNTG1 and SNTG2, the transmembrane dystroglycan complex, and the sarcoglycan-sarcospan complex. Interacts (via the N-terminal of alphaDAG1) with LARGE1; the interaction enhances laminin binding. Interacts with SGCD. Interacts with AGR2 and AGR3. Interacts (betaDAG1) with DMD; the interaction is inhibited by phosphorylation on the PPXY motif. Interacts (betaDAG1, via its PPXY motif) with UTRN (via its WWW and ZZ domains); the interaction is inhibited by phosphorylation on the PPXY motif. Interacts (betaDAG1, via its phosphorylated PPXY motif) with the SH2 domain-containing proteins, FYN, CSK, NCK and SHC. Interacts (betaDAG1) with CAV3 (via a central WW-like domain); the interaction disrupts the binding of DMD. BetaDAG1 directly interacts with ANK3, but not with ANK2; this interaction does not interfere with DMD-binding and is required for retention at costameres. Identified in a dystroglycan complex that contains at least PRX, DRP2, UTRN, DMD and DAG1. Interacts with POMGNT1. BetaDAG1 interacts with CD93. In terms of processing, O-glycosylated. POMGNT1 catalyzes the initial addition of N-acetylglucosamine, giving rise to the GlcNAc(beta1-2)Man(alpha1-)O-Ser/Thr moiety and thus providing the necessary basis for the addition of further carbohydrate moieties. Heavily O-glycosylated comprising of up to two thirds of its mass and the carbohydrate composition differs depending on tissue type. Mucin-type O-glycosylation is important for ligand binding activity. O-mannosylation is found in high abundance in both brain and muscle where the most abundant glycan is Sia-alpha-2-3-Gal-beta-1-4-Glc-NAc-beta-1-2-Man. In muscle, glycosylation on Thr-317, Thr-319 and Thr-379 by a phosphorylated O-mannosyl glycan with the structure 2-(N-acetylamido)-2-deoxygalactosyl-beta-1,3-2-(N-acetylamido)-2-deoxyglucosyl-beta-1,4-6-phosphomannose is mediated by like-acetylglucosaminyltransferase (LARGE1) protein amd is required for laminin binding. O-glycosylated in the N-terminal region with a core 1 or possibly core 8 glycan. The brain form displays a unique glycosylation pattern which is absent in other tissues; this form shows enhanced binding to laminin LAMA5 compared to the skeletal muscle form. Post-translationally, N-glycosylated. Autolytic cleavage produces the alpha and beta subunits. In cutaneous cells, as well as in certain pathological conditions, shedding of beta-dystroglycan can occur releasing a peptide of about 30 kDa. In terms of processing, SRC-mediated phosphorylation of the PPXY motif of the beta subunit recruits SH2 domain-containing proteins, but inhibits binding to WWW domain-containing proteins, DMD and UTRN. This phosphorylation also inhibits nuclear entry. Expressed in brain (at protein level). Expressed in the myelin sheath of peripheral nerves.

Its subcellular location is the secreted. It localises to the extracellular space. The protein resides in the cell membrane. The protein localises to the cytoplasm. It is found in the cytoskeleton. Its subcellular location is the nucleus. It localises to the nucleoplasm. The protein resides in the sarcolemma. The protein localises to the postsynaptic cell membrane. The dystroglycan complex is involved in a number of processes including laminin and basement membrane assembly, sarcolemmal stability, cell survival, peripheral nerve myelination, nodal structure, cell migration, and epithelial polarization. In terms of biological role, extracellular peripheral glycoprotein that acts as a receptor for extracellular matrix proteins containing laminin-G domains. Receptor for laminin-2 (LAMA2) and agrin in peripheral nerve Schwann cells. Also acts as a receptor for laminin LAMA5. Its function is as follows. Transmembrane protein that plays important roles in connecting the extracellular matrix to the cytoskeleton. Acts as a cell adhesion receptor in both muscle and non-muscle tissues. Receptor for both DMD and UTRN and, through these interactions, scaffolds axin to the cytoskeleton. Also functions in cell adhesion-mediated signaling and implicated in cell polarity. This is Dystroglycan 1 from Bos taurus (Bovine).